The sequence spans 230 residues: Cytidylate kinase (230 aa).

Residue 10-18 participates in ATP binding; that stretch reads GFSSTGKST.

The protein belongs to the cytidylate kinase family. Type 1 subfamily.

It localises to the cytoplasm. The catalysed reaction is CMP + ATP = CDP + ADP. It catalyses the reaction dCMP + ATP = dCDP + ADP. The chain is Cytidylate kinase from Flavobacterium johnsoniae (strain ATCC 17061 / DSM 2064 / JCM 8514 / BCRC 14874 / CCUG 350202 / NBRC 14942 / NCIMB 11054 / UW101) (Cytophaga johnsonae).